Here is a 421-residue protein sequence, read N- to C-terminus: Cyclin-A1 (421 aa).

The interval 1–20 (MRRHSSKSGVALPPVGQGPD) is disordered.

It belongs to the cyclin family. Cyclin AB subfamily. In terms of assembly, interacts with the CDK2 and the CDC2 protein kinases to form a serine/threonine kinase holoenzyme complex. The cyclin subunit imparts substrate specificity to the complex. Does not bind CDK4 and CDK5 (in vitro). The cyclin A1-CDK2 complex interacts with transcription factor E2F-1 and RB proteins. Found in a complex with CDK2, CABLES1 and CCNE1. Interacts with INCA1 and KLHDC9. In terms of processing, polyubiquitinated via 'Lys-11'-linked ubiquitin by the anaphase-promoting complex (APC/C), leading to its degradation by the proteasome. Deubiquitinated and stabilized by USP37 enables entry into S phase. Ubiquitinated during the G1 phase by the SCF(FBXO31) complex, leading to its proteasomal degradation.

Its subcellular location is the nucleus. May be involved in the control of the cell cycle at the G1/S (start) and G2/M (mitosis) transitions. May primarily function in the control of the germline meiotic cell cycle and additionally in the control of mitotic cell cycle in some somatic cells. In Rattus norvegicus (Rat), this protein is Cyclin-A1 (Ccna1).